We begin with the raw amino-acid sequence, 156 residues long: Small ribosomal subunit protein uS7 (156 aa).

It belongs to the universal ribosomal protein uS7 family. In terms of assembly, part of the 30S ribosomal subunit. Contacts proteins S9 and S11.

One of the primary rRNA binding proteins, it binds directly to 16S rRNA where it nucleates assembly of the head domain of the 30S subunit. Is located at the subunit interface close to the decoding center, probably blocks exit of the E-site tRNA. This chain is Small ribosomal subunit protein uS7, found in Aeromonas salmonicida (strain A449).